A 480-amino-acid chain; its full sequence is Sensor histidine kinase CusS (480 aa).

The Cytoplasmic portion of the chain corresponds to M1–R15. Residues L16–I36 traverse the membrane as a helical segment. The Periplasmic segment spans residues H37–K186. The chain crosses the membrane as a helical span at residues L187 to H207. Residues K208–T260 form the HAMP domain. Over K208–A480 the chain is Cytoplasmic. Residues D268–A480 form the Histidine kinase domain. H271 carries the post-translational modification Phosphohistidine; by autocatalysis.

In terms of processing, autophosphorylated.

The protein localises to the cell inner membrane. The enzyme catalyses ATP + protein L-histidine = ADP + protein N-phospho-L-histidine.. Member of the two-component regulatory system CusS/CusR involved in response to copper and silver. Acts as a copper/silver ion sensor. Activates CusR by phosphorylation. This chain is Sensor histidine kinase CusS (cusS), found in Escherichia coli (strain K12).